The chain runs to 400 residues: Dehydrogenase efuE (400 aa).

Residues 222–223 (AI), 303–305 (TAR), and Asp-329 contribute to the NAD(+) site. Residue Arg-305 is part of the active site. The active site involves Glu-334. His-352 acts as the Proton donor in catalysis. Position 352–355 (352–355 (HLGG)) interacts with NAD(+).

Belongs to the D-isomer specific 2-hydroxyacid dehydrogenase family.

The protein operates within secondary metabolite biosynthesis; terpenoid biosynthesis. In terms of biological role, dehydrogenase; part of the gene cluster that mediates the biosynthesis of enfumafungin, a glycosylated fernene-type triterpenoid with potent antifungal activity, mediated by its interaction with beta-1,3-glucan synthase and the fungal cell wall. The pathway begins with the terpene cyclase-glycosyl transferase fusion protein that most likely uses 2,3-oxidosqualene as substrate and catalyzes glycosylation immediately after cyclization. The fernene glycoside then could be processed by the desaturase efuI which catalyzes isomerization of a double bond established by efuA to form the core structure. The latter would then undergo a series of hydroxylations in unknown order at C-2, C-19, C-23 and C-25, which would be catalyzed by two of the three cytochrome P450 monooxygenases efuB, efuG or efuH. The hydroxy-group at C-25 becomes oxidized by the dehydrogenase efuE to enable a spontaneous, non-enzymatic hemiacetal formation with C-23. After hydroxylation at C-2, acetylation by the acetyltransferase efuC takes place. The final steps in enfumafungin biosynthesis require expansion of the 5-membered ring by lactonization via a Baeyer-Villiger reaction mediated by one of the BGC's cytochrome P450 monooxygenases (efuB, efuG or efuH) followed by ring cleavage. This type of reaction would establish a double bond between C-20 and C-21 which could be reduced by the reductase efuL to form the final product. The chain is Dehydrogenase efuE from Hormonema carpetanum.